Reading from the N-terminus, the 212-residue chain is External core antigen (212 aa).

A signal peptide spans 1 to 19; that stretch reads MQLFHLCLIISCTCPTVQA. The interval 25-27 is HBEAG; sequence GWL. Residues 165–212 form a disordered region; it reads NAPILSTLPETTVVRRRGRSPRRRTPSPRRRRSQSPRRRRSQSRESQC. The span at 178 to 205 shows a compositional bias: basic residues; that stretch reads VRRRGRSPRRRTPSPRRRRSQSPRRRRS. Residues 184-190 form a 1; half-length repeat; it reads SPRRRTP. The interval 184-206 is 3 X 8 AA repeats of S-P-R-R-R-R-S-Q; that stretch reads SPRRRTPSPRRRRSQSPRRRRSQ. A propeptide spanning residues 184-212 is cleaved from the precursor; it reads SPRRRTPSPRRRRSQSPRRRRSQSRESQC. 2 tandem repeats follow at residues 191–198 and 199–206.

It belongs to the orthohepadnavirus precore antigen family. Homodimerizes. Post-translationally, phosphorylated. Cleaved by host furin.

The protein localises to the secreted. The protein resides in the host nucleus. Its function is as follows. May regulate immune response to the intracellular capsid in acting as a T-cell tolerogen, by having an immunoregulatory effect which prevents destruction of infected cells by cytotoxic T-cells. This immune regulation may predispose to chronicity during perinatal infections and prevent severe liver injury during adult infections. The sequence is that of External core antigen from Hepatitis B virus genotype D subtype ayw (isolate Italy/CI/1992) (HBV-D).